Here is a 227-residue protein sequence, read N- to C-terminus: Killer cell lectin-like receptor subfamily B member 1A (227 aa).

The Cytoplasmic portion of the chain corresponds to 1–45; that stretch reads MDTARVYFGLKPPRTPGAWHESPPSLPPDACRCPRSHRLALKLSC. The short motif at 31–34 is the LCK-binding motif element; sequence CRCP. The helical; Signal-anchor for type II membrane protein transmembrane segment at 46–66 threads the bilayer; sequence AGLILLVVTLIGMSVLVRVLI. The Extracellular portion of the chain corresponds to 67 to 227; that stretch reads QKPSIEKCYV…TLSNYVGYGH (161 aa). Residues 93–212 form the C-type lectin domain; sequence ECPQDWLSHR…NSDNRWICQK (120 aa). Intrachain disulfides connect Cys-94–Cys-105, Cys-122–Cys-210, and Cys-189–Cys-202.

As to quaternary structure, homodimer; disulfide-linked. Interacts with tyrosine kinase LCK. In terms of tissue distribution, expressed in natural killer cells.

It localises to the membrane. In terms of biological role, plays a stimulatory role on natural killer (NK) cell cytotoxicity. In Mus musculus (Mouse), this protein is Killer cell lectin-like receptor subfamily B member 1A (Klrb1a).